The sequence spans 243 residues: Small ribosomal subunit protein uS3 (243 aa).

One can recognise a KH type-2 domain in the interval 39 to 110 (IRTFIQKKYG…QVRINVVEVE (72 aa)). The interval 216 to 243 (QTIPVGASPKRKASRRPQQFEDRSNENS) is disordered. A compositionally biased stretch (basic and acidic residues) spans 233–243 (QQFEDRSNENS).

It belongs to the universal ribosomal protein uS3 family. Part of the 30S ribosomal subunit. Forms a tight complex with proteins S10 and S14.

Binds the lower part of the 30S subunit head. Binds mRNA in the 70S ribosome, positioning it for translation. This is Small ribosomal subunit protein uS3 from Prochlorococcus marinus (strain AS9601).